The primary structure comprises 218 residues: Chromophore lyase CpcT/CpeT 1 (218 aa).

This sequence belongs to the CpcT/CpeT biliprotein lyase family.

In terms of biological role, covalently attaches a chromophore to Cys residue(s) of phycobiliproteins. The chain is Chromophore lyase CpcT/CpeT 1 from Synechococcus sp. (strain JA-3-3Ab) (Cyanobacteria bacterium Yellowstone A-Prime).